Here is a 371-residue protein sequence, read N- to C-terminus: Aldose sugar dehydrogenase YliI (371 aa).

The N-terminal stretch at 1 to 20 is a signal peptide; that stretch reads MHRQSFFLVPLICLSSALWA. Residue Gln-82 coordinates pyrroloquinoline quinone. The active-site Proton acceptor is His-147. The segment at 214–215 is PQQ; that stretch reads RN. Residues Glu-240 and Tyr-250 each coordinate Ca(2+). Tyr-261 is a pyrroloquinoline quinone binding site. PQQ stretches follow at residues 312 to 314 and 341 to 343; these read ALK and RIR.

Belongs to the PQQ oxidoreductase GdhB family. As to quaternary structure, monomer. The cofactor is Ca(2+). Pyrroloquinoline quinone serves as cofactor.

Its subcellular location is the cell outer membrane. Aldose sugar dehydrogenase with broad substrate specificity. The physiological substrate is unknown. Can oxidize glucose to gluconolactone. Can also utilize D-arabinose, L-arabinose and 2-deoxy-glucose. Has higher activity towards oligomeric sugars, such as maltose, maltotriose or cellobiose. It may function to input sugar-derived electrons into the respiratory network. This is Aldose sugar dehydrogenase YliI (yliI) from Escherichia coli (strain K12).